We begin with the raw amino-acid sequence, 274 residues long: Imidazole glycerol phosphate synthase subunit HisF (274 aa).

Catalysis depends on residues Asp11 and Asp134.

It belongs to the HisA/HisF family. As to quaternary structure, heterodimer of HisH and HisF.

It is found in the cytoplasm. The catalysed reaction is 5-[(5-phospho-1-deoxy-D-ribulos-1-ylimino)methylamino]-1-(5-phospho-beta-D-ribosyl)imidazole-4-carboxamide + L-glutamine = D-erythro-1-(imidazol-4-yl)glycerol 3-phosphate + 5-amino-1-(5-phospho-beta-D-ribosyl)imidazole-4-carboxamide + L-glutamate + H(+). It participates in amino-acid biosynthesis; L-histidine biosynthesis; L-histidine from 5-phospho-alpha-D-ribose 1-diphosphate: step 5/9. Functionally, IGPS catalyzes the conversion of PRFAR and glutamine to IGP, AICAR and glutamate. The HisF subunit catalyzes the cyclization activity that produces IGP and AICAR from PRFAR using the ammonia provided by the HisH subunit. The polypeptide is Imidazole glycerol phosphate synthase subunit HisF (Methanobrevibacter smithii (strain ATCC 35061 / DSM 861 / OCM 144 / PS)).